The following is an 897-amino-acid chain: Interleukin enhancer-binding factor 3-A (897 aa).

One can recognise a DZF domain in the interval 5–379 (RIFLNDDRHV…PLKRPIEEDG (375 aa)). 3 disordered regions span residues 52–85 (QEKD…GENP), 364–403 (TTYA…PPQV), and 466–502 (MGLP…EVDS). 2 stretches are compositionally biased toward basic and acidic residues: residues 72 to 81 (EEGKDSEMKT) and 373 to 384 (RPIEEDGDDKSP). The short motif at 372–390 (KRPIEEDGDDKSPSKKKKK) is the Bipartite nuclear localization signal element. DRBM domains follow at residues 399–468 (EPPQ…DMGL) and 521–587 (HGKN…KLFP). Disordered stretches follow at residues 627–650 (PPPQ…GRGG) and 708–797 (GDSY…AQGA). Positions 637 to 650 (RGGMNRGRGRGRGG) are enriched in gly residues. Residues 714-747 (PTPPKPFVNKKPPPPQQQQQQQPPPQHASNPPKP) are compositionally biased toward pro residues. Residues 749-794 (YNQGYQGHQGGQQQQQQQQQQQTYNQNQYSNYGPPQKQKGGYNQGA) are compositionally biased toward low complexity.

In terms of assembly, a component of a ybx2/frgy2-containing mRNA-ribonucleoprotein (mRNP) complex. Also a component of the CCAAT box transcription factor (CBTF) complex. In terms of processing, phosphorylated. Phosphorylation affects nuclear translocation. Methylated by protein arginine N-methyltransferase 1 (prmt1b) in the RGG-rich domain. Methylation decreases DNA-binding and thereby decreases transcription of the gata2 gene, but does not regulate dsRNA binding or subcellular localization. As to expression, expressed mainly in the ectoderm (at protein level).

It is found in the nucleus. The protein resides in the cytoplasm. Its function is as follows. RNA-binding protein that plays an essential role in the biogenesis of circular RNAs (circRNAs) which are produced by back-splicing circularization of pre-mRNAs. Within the nucleus, promotes circRNAs processing by stabilizing the regulatory elements residing in the flanking introns of the circularized exons. Plays thereby a role in the back-splicing of a subset of circRNAs. As a consequence, participates in a wide range of transcriptional and post-transcriptional processes. Binds to poly-U elements and AU-rich elements (AREs) in the 3'-UTR of target mRNAs. Upon viral infection, ILF3 accumulates in the cytoplasm and participates in the innate antiviral response. Mechanistically, ILF3 becomes phosphorylated and activated by the double-stranded RNA-activated protein kinase/PKR which releases ILF3 from cellular mature circRNAs. In turn, unbound ILF3 molecules are able to interact with and thus inhibit viral mRNAs. Has a cytoplasmic role early in development as part of a ribonucleoprotein (mRNP) complex which may regulate mRNA transport and/or translation. Following nuclear localization at the mid-blastula transition, acts as a transcription factor and binds the 5'-CCAAT-3' promoter sequence to regulate transcription of the gata2 gene as a subunit of the CCAAT box transcription factor (CBTF). Its role as an mRNP component negatively regulates its activity as a transcription factor by precluding its nuclear localization. This chain is Interleukin enhancer-binding factor 3-A (ilf3-a), found in Xenopus laevis (African clawed frog).